A 71-amino-acid polypeptide reads, in one-letter code: Large ribosomal subunit protein bL31 (71 aa).

This sequence belongs to the bacterial ribosomal protein bL31 family. Type A subfamily. Part of the 50S ribosomal subunit.

Binds the 23S rRNA. The chain is Large ribosomal subunit protein bL31 (rpmE) from Mycoplasmopsis synoviae (strain 53) (Mycoplasma synoviae).